The sequence spans 498 residues: Cytochrome P450 monooxygenase 71 (498 aa).

A helical membrane pass occupies residues 7-24 (YVFALLGILATLYFVRWS). Residue asparagine 425 is glycosylated (N-linked (GlcNAc...) asparagine). A heme-binding site is contributed by cysteine 440.

It belongs to the cytochrome P450 family. Heme serves as cofactor.

The protein localises to the membrane. It participates in secondary metabolite biosynthesis. Functionally, cytochrome P450 monooxygenase that is able to use dehydroabietic acid and testosterone as substrates for oxidation, suggesting that the natural substrate(s) may be structurally related to steroid compounds. The polypeptide is Cytochrome P450 monooxygenase 71 (Postia placenta (strain ATCC 44394 / Madison 698-R) (Brown rot fungus)).